A 184-amino-acid chain; its full sequence is MKKNLTNIYLIGPMGAGKTSVGSQLAKLTKRILYDSDKEIEKRTGADIAWIFEMEGEAGFRRREREMIEALCKLDNIILATGGGVVLDEKNRQQISETGVVIYLTASIDTQLKRIGQKGEMRRPLFIKNNSKEKLQQLNEIRKPLYQAMADLVYPTDDLNPRQLATQILVDIKQTYQTYENRTR.

15 to 20 (GAGKTS) is an ATP binding site. Position 19 (Thr19) interacts with Mg(2+). Substrate-binding residues include Asp37, Arg61, and Gly83. Arg123 serves as a coordination point for ATP. Arg142 is a binding site for substrate.

The protein belongs to the shikimate kinase family. In terms of assembly, monomer. Requires Mg(2+) as cofactor.

The protein resides in the cytoplasm. The enzyme catalyses shikimate + ATP = 3-phosphoshikimate + ADP + H(+). It participates in metabolic intermediate biosynthesis; chorismate biosynthesis; chorismate from D-erythrose 4-phosphate and phosphoenolpyruvate: step 5/7. In terms of biological role, catalyzes the specific phosphorylation of the 3-hydroxyl group of shikimic acid using ATP as a cosubstrate. In Coxiella burnetii (strain CbuK_Q154) (Coxiella burnetii (strain Q154)), this protein is Shikimate kinase.